Reading from the N-terminus, the 275-residue chain is Membrane protein insertase YidC 1 (275 aa).

A signal peptide spans M1–A25. Residue C26 is the site of N-palmitoyl cysteine attachment. A lipid anchor (S-diacylglycerol cysteine) is attached at C26. 5 helical membrane passes run S58 to F78, Y129 to L149, L171 to L191, V198 to F216, and V222 to L240.

Belongs to the OXA1/ALB3/YidC family. Type 2 subfamily.

It localises to the cell membrane. Functionally, required for the insertion and/or proper folding and/or complex formation of integral membrane proteins into the membrane. Involved in integration of membrane proteins that insert both dependently and independently of the Sec translocase complex, as well as at least some lipoproteins. The sequence is that of Membrane protein insertase YidC 1 from Streptococcus pyogenes serotype M6 (strain ATCC BAA-946 / MGAS10394).